The primary structure comprises 137 residues: Large ribosomal subunit protein uL16c (137 aa).

This sequence belongs to the universal ribosomal protein uL16 family. In terms of assembly, part of the 50S ribosomal subunit.

Its subcellular location is the plastid. It is found in the chloroplast. The sequence is that of Large ribosomal subunit protein uL16c from Adiantum capillus-veneris (Maidenhair fern).